Reading from the N-terminus, the 155-residue chain is Interleukin-2 (155 aa).

A signal peptide spans 1–20 (MYKIQLLSCIALTLALVANG). Residue Thr-23 is glycosylated (O-linked (GalNAc...) threonine). An intrachain disulfide couples Cys-79 to Cys-127.

This sequence belongs to the IL-2 family.

The protein localises to the secreted. Cytokine produced by activated CD4-positive helper T-cells and to a lesser extend activated CD8-positive T-cells and natural killer (NK) cells that plays pivotal roles in the immune response and tolerance. Binds to a receptor complex composed of either the high-affinity trimeric IL-2R (IL2RA/CD25, IL2RB/CD122 and IL2RG/CD132) or the low-affinity dimeric IL-2R (IL2RB and IL2RG). Interaction with the receptor leads to oligomerization and conformation changes in the IL-2R subunits resulting in downstream signaling starting with phosphorylation of JAK1 and JAK3. In turn, JAK1 and JAK3 phosphorylate the receptor to form a docking site leading to the phosphorylation of several substrates including STAT5. This process leads to activation of several pathways including STAT, phosphoinositide-3-kinase/PI3K and mitogen-activated protein kinase/MAPK pathways. Functions as a T-cell growth factor and can increase NK-cell cytolytic activity as well. Promotes strong proliferation of activated B-cells and subsequently immunoglobulin production. Plays a pivotal role in regulating the adaptive immune system by controlling the survival and proliferation of regulatory T-cells, which are required for the maintenance of immune tolerance. Moreover, participates in the differentiation and homeostasis of effector T-cell subsets, including Th1, Th2, Th17 as well as memory CD8-positive T-cells. The chain is Interleukin-2 (IL2) from Boselaphus tragocamelus (Nilgai).